The primary structure comprises 672 residues: ATP-dependent zinc metalloprotease FtsH 1 (672 aa).

Residues 1–22 (MKKDSESNSSDKSNKEELSTGR) are disordered. At 1–23 (MKKDSESNSSDKSNKEELSTGRR) the chain is on the cytoplasmic side. A helical transmembrane segment spans residues 24 to 44 (GGNPMIIALVITVLAAMLFFN). The Periplasmic segment spans residues 45–141 (QPEPSSLISA…KFSPPDNTAA (97 aa)). Residues 142-162 (ILNLLILVGLPLAIFFFIFMM) form a helical membrane-spanning segment. At 163-672 (IRRTRNDMMG…TSNASARRED (510 aa)) the chain is on the cytoplasmic side. 237–244 (GPPGTGKT) contacts ATP. His-458 lines the Zn(2+) pocket. Glu-459 is an active-site residue. Zn(2+) contacts are provided by His-462 and Asp-534. The segment at 642-672 (RLGDEEGKVEQIMAPEGAAERTSNASARRED) is disordered. A compositionally biased stretch (polar residues) spans 662-672 (RTSNASARRED).

In the central section; belongs to the AAA ATPase family. It in the C-terminal section; belongs to the peptidase M41 family. As to quaternary structure, homohexamer. Zn(2+) serves as cofactor.

Its subcellular location is the cell inner membrane. Functionally, acts as a processive, ATP-dependent zinc metallopeptidase for both cytoplasmic and membrane proteins. Plays a role in the quality control of integral membrane proteins. The sequence is that of ATP-dependent zinc metalloprotease FtsH 1 from Rhodopirellula baltica (strain DSM 10527 / NCIMB 13988 / SH1).